The chain runs to 498 residues: Lysine--tRNA ligase (498 aa).

Mg(2+)-binding residues include E407 and E414.

The protein belongs to the class-II aminoacyl-tRNA synthetase family. In terms of assembly, homodimer. Mg(2+) serves as cofactor.

It is found in the cytoplasm. The catalysed reaction is tRNA(Lys) + L-lysine + ATP = L-lysyl-tRNA(Lys) + AMP + diphosphate. The protein is Lysine--tRNA ligase of Rhizobium johnstonii (strain DSM 114642 / LMG 32736 / 3841) (Rhizobium leguminosarum bv. viciae).